The following is a 560-amino-acid chain: MNNNIINLIAAIILSLSIIFGWQYFVVKPEQKKQQQQIAVQKAENLKKQQLKAVVEPATGIVVQEESQVQRIKIESESLTGSISLKGLRFDDLILKKYKQDLSKNSPEVRLFSPANTENAYFAEVGLVSNLSSVKLPNNDTIWNSDSEILSPEKPVHLFWVNEDGVKFLVTITVDENYLFTIEQTIVNNSDKELPVQSYGLINRKYIAVEKAVNILHQGPIGCIDENLKEYSYDDIKDKKSEKFVASKVDWIGITDKYWLSSLIPDKSSNYSSNFNYALKQGTERYQVDFISPVQIIKPGEDFSIKSRIFAGAKKVDLLDKYEKQYDIKLFDRAIDFGWFYIITKPVFYAMNFFYGYVGNFGVSILIVTVIIKLLMFTLANKSYRSMKKMKNLQPEIDRIKNLYSDDKARLNQEIMALYKKEKVNPVAGCLPILVQIPVFFSIYKVLYVTIEMRQAPFYGWIKDLSASDPTTIFNLFGLLPFSPPLFLMIGAWPILMAITMFLQQKMSPEPADPMQAQVMKFMPLIFLFMFSSFPVGLLIYWSWNNILSIIQQYYINKFN.

A run of 6 helical transmembrane segments spans residues 5 to 25 (IINL…WQYF), 334 to 354 (AIDF…MNFF), 357 to 377 (YVGN…LLMF), 431 to 451 (LPIL…YVTI), 476 to 496 (LFGL…WPIL), and 522 to 542 (FMPL…LIYW).

The protein belongs to the OXA1/ALB3/YidC family. Type 1 subfamily. Interacts with the Sec translocase complex via SecD. Specifically interacts with transmembrane segments of nascent integral membrane proteins during membrane integration.

The protein resides in the cell inner membrane. Functionally, required for the insertion and/or proper folding and/or complex formation of integral membrane proteins into the membrane. Involved in integration of membrane proteins that insert both dependently and independently of the Sec translocase complex, as well as at least some lipoproteins. Aids folding of multispanning membrane proteins. This Rickettsia africae (strain ESF-5) protein is Membrane protein insertase YidC.